We begin with the raw amino-acid sequence, 125 residues long: Homeobox protein HD-8 (125 aa).

Positions glutamate 30–glycine 89 form a DNA-binding region, homeobox.

It is found in the nucleus. The protein is Homeobox protein HD-8 (HD-8) of Encephalitozoon cuniculi (strain GB-M1) (Microsporidian parasite).